We begin with the raw amino-acid sequence, 35 residues long: Phospholipase A2 bitanarin (35 aa).

Belongs to the phospholipase A2 family. Group II subfamily. As to quaternary structure, monomer. Ca(2+) is required as a cofactor. In terms of processing, contains 14 disulfide bonds. As to expression, expressed by the venom gland.

The protein resides in the secreted. The enzyme catalyses a 1,2-diacyl-sn-glycero-3-phosphocholine + H2O = a 1-acyl-sn-glycero-3-phosphocholine + a fatty acid + H(+). Snake venom phospholipase A2 (PLA2) that is the first competitive blocker of nicotinic acetylcholine receptors (nAChRs). Competes with alpha-bungarotoxin for binding to nAChRs and acetylcholine binding proteins (AChBPs) and blocks acetylcholine-elicited current. PLA2 catalyzes the calcium-dependent hydrolysis of the 2-acyl groups in 3-sn-phosphoglycerides. The polypeptide is Phospholipase A2 bitanarin (Bitis arietans (African puff adder)).